The following is a 508-amino-acid chain: Serine/threonine-protein kinase VRK2 (508 aa).

The 291-residue stretch at 29–319 folds into the Protein kinase domain; the sequence is WVLGKKIGSG…KKILNPHGIP (291 aa). ATP contacts are provided by residues 35–43 and Lys-61; that span reads IGSGGFGLI. Asp-166 (proton acceptor) is an active-site residue. The residue at position 336 (Thr-336) is a Phosphothreonine. The tract at residues 397–508 is interaction with MAP3K7; it reads TRRRQKYQES…MLVFLALFFL (112 aa). The residue at position 406 (Ser-406) is a Phosphoserine. The helical; Anchor for type IV membrane protein transmembrane segment at 487–507 threads the bilayer; sequence VYYYRIIIPVLLMLVFLALFF.

It belongs to the protein kinase superfamily. CK1 Ser/Thr protein kinase family. VRK subfamily. In terms of assembly, isoform 1 interacts with MAP3K7, MAP2K7, MAP2K1 and KSR1. Isoform 1 and isoform 2 interact with RAN and MAPK8IP1. (Microbial infection) Isoform 1 interacts with Epstein-Barr virus BHRF1; this interaction is involved in protecting cells from apoptosis. As to quaternary structure, (Microbial infection) Isoform 1 interacts with vaccinia protein B12. Autophosphorylated. As to expression, isoform 1 and isoform 2 are expressed in various tumor cell lines. Expression of isoform 1 inversely correlates with ERBB2 in breast carcinomas (at protein level). Widely expressed. Highly expressed in fetal liver, skeletal muscle, pancreas, heart, peripheral blood leukocytes and testis.

The protein localises to the cytoplasm. It localises to the endoplasmic reticulum membrane. It is found in the mitochondrion membrane. Its subcellular location is the nucleus envelope. The protein resides in the nucleus. It carries out the reaction L-seryl-[protein] + ATP = O-phospho-L-seryl-[protein] + ADP + H(+). It catalyses the reaction L-threonyl-[protein] + ATP = O-phospho-L-threonyl-[protein] + ADP + H(+). Its activity is regulated as follows. RAN inhibits its autophosphorylation and its ability to phosphorylate histone H3. Its function is as follows. Serine/threonine kinase that regulates several signal transduction pathways. Isoform 1 modulates the stress response to hypoxia and cytokines, such as interleukin-1 beta (IL1B) and this is dependent on its interaction with MAPK8IP1, which assembles mitogen-activated protein kinase (MAPK) complexes. Inhibition of signal transmission mediated by the assembly of MAPK8IP1-MAPK complexes reduces JNK phosphorylation and JUN-dependent transcription. Phosphorylates 'Thr-18' of p53/TP53, histone H3, and may also phosphorylate MAPK8IP1. Phosphorylates BANF1 and disrupts its ability to bind DNA and reduces its binding to LEM domain-containing proteins. Down-regulates the transactivation of transcription induced by ERBB2, HRAS, BRAF, and MEK1. Blocks the phosphorylation of ERK in response to ERBB2 and HRAS. Can also phosphorylate the following substrates that are commonly used to establish in vitro kinase activity: casein, MBP and histone H2B, but it is not sure that this is physiologically relevant. In terms of biological role, phosphorylates 'Thr-18' of p53/TP53, as well as histone H3. Reduces p53/TP53 ubiquitination by MDM2, promotes p53/TP53 acetylation by EP300 and thereby increases p53/TP53 stability and activity. The polypeptide is Serine/threonine-protein kinase VRK2 (VRK2) (Homo sapiens (Human)).